The primary structure comprises 304 residues: ATP synthase gamma chain (304 aa).

Belongs to the ATPase gamma chain family. F-type ATPases have 2 components, CF(1) - the catalytic core - and CF(0) - the membrane proton channel. CF(1) has five subunits: alpha(3), beta(3), gamma(1), delta(1), epsilon(1). CF(0) has three main subunits: a, b and c.

It is found in the cell membrane. Functionally, produces ATP from ADP in the presence of a proton gradient across the membrane. The gamma chain is believed to be important in regulating ATPase activity and the flow of protons through the CF(0) complex. This is ATP synthase gamma chain from Mycobacterium ulcerans (strain Agy99).